Reading from the N-terminus, the 318-residue chain is HTH-type transcriptional regulatory protein TyrR (318 aa).

One can recognise a Sigma-54 factor interaction; truncated domain in the interval 15–239 (FIVQSEAMKS…LYNTLYRACS (225 aa)). Residues 43–50 (GETGSGKD) and 101–110 (ANKGTVLLDG) each bind ATP. A DNA-binding region (H-T-H motif) is located at residues 292-312 (STRKLAQRLGVSHTAIANKLK).

Homodimer. In presence of tyrosine (or high concentrations of phenylalanine or tryptophan) and ATP, it self-associates to form a hexamer.

The protein localises to the cytoplasm. The DNA binding ability is drastically reduced in the presence of ATP. Tyrosine further reduces the binding affinity of TyrR in the presence of ATP. Its function is as follows. Transcriptional regulator of the TyrR regulon, which includes a number of genes coding for proteins involved in the biosynthesis or transport of the three aromatic amino acids, phenylalanine, tyrosine and tryptophan. These three aromatic amino acids act as effectors which bind to the TyrR protein to form an active regulatory protein. Acts by binding specifically to TyrR boxes in the promoter region of the target genes. Can efficiently repress the transcription of the aroF promoter, but lacks the ability to function as a transcriptional activator. This chain is HTH-type transcriptional regulatory protein TyrR, found in Haemophilus influenzae (strain ATCC 51907 / DSM 11121 / KW20 / Rd).